Consider the following 324-residue polypeptide: Glyoxylate/hydroxypyruvate reductase B (324 aa).

Active-site residues include Arg-237 and Glu-266. His-285 acts as the Proton donor in catalysis.

It belongs to the D-isomer specific 2-hydroxyacid dehydrogenase family. GhrB subfamily. Homodimer.

The protein resides in the cytoplasm. It catalyses the reaction glycolate + NADP(+) = glyoxylate + NADPH + H(+). It carries out the reaction (R)-glycerate + NAD(+) = 3-hydroxypyruvate + NADH + H(+). The catalysed reaction is (R)-glycerate + NADP(+) = 3-hydroxypyruvate + NADPH + H(+). Functionally, catalyzes the NADPH-dependent reduction of glyoxylate and hydroxypyruvate into glycolate and glycerate, respectively. This Enterobacter sp. (strain 638) protein is Glyoxylate/hydroxypyruvate reductase B.